The sequence spans 298 residues: UDP-N-acetylenolpyruvoylglucosamine reductase (298 aa).

Residues Thr-27–Glu-191 enclose the FAD-binding PCMH-type domain. Arg-170 is an active-site residue. Ser-220 functions as the Proton donor in the catalytic mechanism. Glu-290 is a catalytic residue.

The protein belongs to the MurB family. The cofactor is FAD.

It is found in the cytoplasm. The enzyme catalyses UDP-N-acetyl-alpha-D-muramate + NADP(+) = UDP-N-acetyl-3-O-(1-carboxyvinyl)-alpha-D-glucosamine + NADPH + H(+). The protein operates within cell wall biogenesis; peptidoglycan biosynthesis. Cell wall formation. The protein is UDP-N-acetylenolpyruvoylglucosamine reductase of Listeria innocua serovar 6a (strain ATCC BAA-680 / CLIP 11262).